A 184-amino-acid polypeptide reads, in one-letter code: Small ribosomal subunit protein eS8 (184 aa).

The disordered stretch occupies residues 1–23; sequence MGISRDSRHKRRLTGGRYPVHKK. Basic residues predominate over residues 7-23; the sequence is SRHKRRLTGGRYPVHKK.

This sequence belongs to the eukaryotic ribosomal protein eS8 family.

In Theileria annulata, this protein is Small ribosomal subunit protein eS8 (RPS8).